Here is a 250-residue protein sequence, read N- to C-terminus: NADH-quinone oxidoreductase subunit C (250 aa).

It belongs to the complex I 30 kDa subunit family. As to quaternary structure, NDH-1 is composed of 14 different subunits. Subunits NuoB, C, D, E, F, and G constitute the peripheral sector of the complex.

The protein resides in the cell inner membrane. The enzyme catalyses a quinone + NADH + 5 H(+)(in) = a quinol + NAD(+) + 4 H(+)(out). Functionally, NDH-1 shuttles electrons from NADH, via FMN and iron-sulfur (Fe-S) centers, to quinones in the respiratory chain. The immediate electron acceptor for the enzyme in this species is believed to be ubiquinone. Couples the redox reaction to proton translocation (for every two electrons transferred, four hydrogen ions are translocated across the cytoplasmic membrane), and thus conserves the redox energy in a proton gradient. The polypeptide is NADH-quinone oxidoreductase subunit C (Xanthomonas campestris pv. campestris (strain 8004)).